Here is a 599-residue protein sequence, read N- to C-terminus: Elongation factor 4 (599 aa).

In terms of domain architecture, tr-type G spans S5 to E187. Residues D17–T22 and N134–D137 contribute to the GTP site.

The protein belongs to the TRAFAC class translation factor GTPase superfamily. Classic translation factor GTPase family. LepA subfamily.

The protein localises to the cell inner membrane. The catalysed reaction is GTP + H2O = GDP + phosphate + H(+). Required for accurate and efficient protein synthesis under certain stress conditions. May act as a fidelity factor of the translation reaction, by catalyzing a one-codon backward translocation of tRNAs on improperly translocated ribosomes. Back-translocation proceeds from a post-translocation (POST) complex to a pre-translocation (PRE) complex, thus giving elongation factor G a second chance to translocate the tRNAs correctly. Binds to ribosomes in a GTP-dependent manner. This is Elongation factor 4 from Pseudomonas putida (strain ATCC 47054 / DSM 6125 / CFBP 8728 / NCIMB 11950 / KT2440).